Consider the following 1099-residue polypeptide: SLIT-ROBO Rho GTPase-activating protein 3 (1099 aa).

One can recognise an F-BAR domain in the interval 19-314 (AQIKEIRTQL…AVDNLDSRSD (296 aa)). Residues 352–392 (QTELLMRYHQLQSRLATLKIENEEVRKTLDATMQTLQDMLT) adopt a coiled-coil conformation. A disordered region spans residues 470-493 (GERAECGTTRPPCLPPKPQKMRRP). The Rho-GAP domain maps to 506–694 (GSMEAFIKDS…TIIIHHEAIF (189 aa)). Residues 744 to 803 (VEQIEAIAKFDYVGRSPRELSFKKGASLLLYHRASEDWWEGRHNGVDGLIPHQYIVVQDM) form the SH3 domain. Residues 809–820 (DSLSQKADSEAS) show a composition bias toward polar residues. The tract at residues 809 to 846 (DSLSQKADSEASSGPLLDDKASSKNDLQSPTEHISDYG) is disordered. Phosphoserine occurs at positions 817, 820, 821, 837, and 858. The tract at residues 861-911 (AAIPRRRSGGDTHSPPRGLGPSIDTPPRAAACPSSPHKIPLSRGRIESPEK) is disordered. A coiled-coil region spans residues 952–987 (HKSLEAEALAEDIEKTMSTALHELRELERQNTVKQA). Ser-954 carries the phosphoserine modification. 2 disordered regions span residues 994–1014 (TLEP…SPLH) and 1045–1099 (ARLA…SGTM). Over residues 1060–1074 (VRPVVQHRSSSSSSS) the composition is skewed to low complexity. Positions 1089–1099 (PNSSSDKSGTM) are enriched in polar residues.

Homodimer. Forms a heterooligomer with SRGAP1 and SRGAP2 through its F-BAR domain. Interacts with WASF1. Probably interacts with ROBO1. Interacts with FASLG.

In terms of biological role, GTPase-activating protein for RAC1 and perhaps CDC42, but not for RhoA small GTPase. May attenuate RAC1 signaling in neurons. The polypeptide is SLIT-ROBO Rho GTPase-activating protein 3 (Srgap3) (Mus musculus (Mouse)).